Reading from the N-terminus, the 323-residue chain is GTP 3',8-cyclase (323 aa).

The Radical SAM core domain maps to 4–228 (KYGRSIDYLR…VPVNIQNNGP (225 aa)). Arginine 13 lines the GTP pocket. [4Fe-4S] cluster is bound by residues cysteine 20 and cysteine 24. Position 26 (tyrosine 26) interacts with S-adenosyl-L-methionine. Residue cysteine 27 coordinates [4Fe-4S] cluster. Arginine 63 lines the GTP pocket. Residue glycine 67 participates in S-adenosyl-L-methionine binding. Threonine 94 provides a ligand contact to GTP. Serine 118 lines the S-adenosyl-L-methionine pocket. Lysine 155 contributes to the GTP binding site. Methionine 189 serves as a coordination point for S-adenosyl-L-methionine. The [4Fe-4S] cluster site is built by cysteine 252 and cysteine 255. GTP is bound at residue 257-259 (RMR). Cysteine 269 contributes to the [4Fe-4S] cluster binding site.

It belongs to the radical SAM superfamily. MoaA family. In terms of assembly, monomer and homodimer. It depends on [4Fe-4S] cluster as a cofactor.

The catalysed reaction is GTP + AH2 + S-adenosyl-L-methionine = (8S)-3',8-cyclo-7,8-dihydroguanosine 5'-triphosphate + 5'-deoxyadenosine + L-methionine + A + H(+). Its pathway is cofactor biosynthesis; molybdopterin biosynthesis. Its function is as follows. Catalyzes the cyclization of GTP to (8S)-3',8-cyclo-7,8-dihydroguanosine 5'-triphosphate. The sequence is that of GTP 3',8-cyclase from Petrotoga mobilis (strain DSM 10674 / SJ95).